The sequence spans 288 residues: Acetyl-coenzyme A carboxylase carboxyl transferase subunit beta (288 aa).

Residues 32–288 (LFAKCPACKH…LELHTEVENV (257 aa)) form the CoA carboxyltransferase N-terminal domain. 4 residues coordinate Zn(2+): Cys36, Cys39, Cys54, and Cys57. A C4-type zinc finger spans residues 36 to 57 (CPACKHTIYQKDLGKNKVCPNC).

Belongs to the AccD/PCCB family. Acetyl-CoA carboxylase is a heterohexamer composed of biotin carboxyl carrier protein (AccB), biotin carboxylase (AccC) and two subunits each of ACCase subunit alpha (AccA) and ACCase subunit beta (AccD). Zn(2+) serves as cofactor.

It localises to the cytoplasm. The catalysed reaction is N(6)-carboxybiotinyl-L-lysyl-[protein] + acetyl-CoA = N(6)-biotinyl-L-lysyl-[protein] + malonyl-CoA. It functions in the pathway lipid metabolism; malonyl-CoA biosynthesis; malonyl-CoA from acetyl-CoA: step 1/1. In terms of biological role, component of the acetyl coenzyme A carboxylase (ACC) complex. Biotin carboxylase (BC) catalyzes the carboxylation of biotin on its carrier protein (BCCP) and then the CO(2) group is transferred by the transcarboxylase to acetyl-CoA to form malonyl-CoA. This Lactococcus lactis subsp. cremoris (strain SK11) protein is Acetyl-coenzyme A carboxylase carboxyl transferase subunit beta.